Here is a 454-residue protein sequence, read N- to C-terminus: Tryptophanase (454 aa).

Position 256 is an N6-(pyridoxal phosphate)lysine (Lys-256).

The protein belongs to the beta-eliminating lyase family. Homotetramer. It depends on pyridoxal 5'-phosphate as a cofactor.

The catalysed reaction is L-tryptophan + H2O = indole + pyruvate + NH4(+). It functions in the pathway amino-acid degradation; L-tryptophan degradation via pyruvate pathway; indole and pyruvate from L-tryptophan: step 1/1. The protein is Tryptophanase of Hyphomonas neptunium (strain ATCC 15444).